The primary structure comprises 417 residues: uncharacterized protein (417 aa).

Positions 1-24 (MSQPPINPLGQPQVPAAASPSGQP) are disordered. A run of 4 helical transmembrane segments spans residues 54 to 74 (VYDT…LLTA), 79 to 99 (LMLY…TLLI), 117 to 137 (AIVV…GAFV), and 143 to 163 (MLVF…LYFM). Residues 211-228 (DLSASARMEEHEASQRQD) are compositionally biased toward basic and acidic residues. Disordered stretches follow at residues 211–283 (DLSA…FKDD) and 308–417 (IMPA…RKNK). Over residues 312–322 (SSRSPNFSTGT) the composition is skewed to polar residues. Over residues 336 to 347 (EPSIPRVSSSSR) the composition is skewed to low complexity. The segment covering 391–401 (STANLSPSNPF) has biased composition (polar residues).

Belongs to the chlamydial CPn_0443/CT_005/TC_0273 family.

The protein localises to the cell membrane. This is an uncharacterized protein from Chlamydia pneumoniae (Chlamydophila pneumoniae).